Reading from the N-terminus, the 124-residue chain is Large ribosomal subunit protein bL12 (124 aa).

It belongs to the bacterial ribosomal protein bL12 family. Homodimer. Part of the ribosomal stalk of the 50S ribosomal subunit. Forms a multimeric L10(L12)X complex, where L10 forms an elongated spine to which 2 to 4 L12 dimers bind in a sequential fashion. Binds GTP-bound translation factors.

In terms of biological role, forms part of the ribosomal stalk which helps the ribosome interact with GTP-bound translation factors. Is thus essential for accurate translation. The sequence is that of Large ribosomal subunit protein bL12 from Herminiimonas arsenicoxydans.